The following is a 261-amino-acid chain: Enolase-phosphatase E1 (261 aa).

Aspartate 16 and glutamate 18 together coordinate Mg(2+). Substrate-binding positions include 153-154 (SS) and lysine 187. Aspartate 212 serves as a coordination point for Mg(2+).

It belongs to the HAD-like hydrolase superfamily. MasA/MtnC family. Monomer. It depends on Mg(2+) as a cofactor.

The protein resides in the cytoplasm. The protein localises to the nucleus. The catalysed reaction is 5-methylsulfanyl-2,3-dioxopentyl phosphate + H2O = 1,2-dihydroxy-5-(methylsulfanyl)pent-1-en-3-one + phosphate. It participates in amino-acid biosynthesis; L-methionine biosynthesis via salvage pathway; L-methionine from S-methyl-5-thio-alpha-D-ribose 1-phosphate: step 3/6. It functions in the pathway amino-acid biosynthesis; L-methionine biosynthesis via salvage pathway; L-methionine from S-methyl-5-thio-alpha-D-ribose 1-phosphate: step 4/6. Bifunctional enzyme that catalyzes the enolization of 2,3-diketo-5-methylthiopentyl-1-phosphate (DK-MTP-1-P) into the intermediate 2-hydroxy-3-keto-5-methylthiopentenyl-1-phosphate (HK-MTPenyl-1-P), which is then dephosphorylated to form the acireductone 1,2-dihydroxy-3-keto-5-methylthiopentene (DHK-MTPene). The sequence is that of Enolase-phosphatase E1 (enoph1) from Salmo salar (Atlantic salmon).